Reading from the N-terminus, the 536-residue chain is GPI alpha-1,2-mannosyltransferase 3 (536 aa).

N15 carries N-linked (GlcNAc...) asparagine glycosylation. Helical transmembrane passes span I40–V60 and V118–V138. N176 is a glycosylation site (N-linked (GlcNAc...) asparagine). 6 consecutive transmembrane segments (helical) span residues L206–F226, Y243–G263, G297–T317, I322–F342, F344–Q364, and A369–H389. An N-linked (GlcNAc...) asparagine glycan is attached at N467.

This sequence belongs to the glycosyltransferase 22 family. PIGB subfamily.

The protein localises to the endoplasmic reticulum membrane. The protein operates within glycolipid biosynthesis; glycosylphosphatidylinositol-anchor biosynthesis. Alpha-1,2-mannosyltransferase that catalyzes the transfer of the third mannose, via an alpha-1,2 bond, from a dolichol-phosphate-mannose (Dol-P-Man) to an alpha-D-Man-(1-&gt;6)-2-PEtn-alpha-D-Man-(1-&gt;4)-alpha-D-GlcN-(1-&gt;6)-(1-radyl,2-acyl-sn-glycero-3-phospho)-2-acyl-inositol intermediate to generate an alpha-D-Man-(1-&gt;2)-alpha-D-Man-(1-&gt;6)-2-PEtn-alpha-D-Man-(1-&gt;4)-alpha-D-GlcN-(1-&gt;6)-(1-radyl,2-acyl-sn-glycero-3-phospho)-2-acyl-inositol (also termed H6) and participates in the nineth step of the glycosylphosphatidylinositol-anchor biosynthesis. May also add the third mannose to an alpha-D-Man-(1-&gt;6)-alpha-D-Man-(1-&gt;4)-alpha-D-GlcN-(1-&gt;6)-(1-radyl,2-acyl-sn-glycero-3-phospho)-2-acyl-inositol (also termed H3) intermediate generating an alpha-D-Man-(1-&gt;2)-alpha-D-Man-(1-&gt;6)-alpha-D-Man-(1-&gt;4)-alpha-D-GlcN-(1-&gt;6)-(1-radyl,2-acyl-sn-glycero-3-phospho)-2-acyl-inositol (also termed H4). This Danio rerio (Zebrafish) protein is GPI alpha-1,2-mannosyltransferase 3.